A 570-amino-acid polypeptide reads, in one-letter code: Berberine bridge enzyme-like 19 (570 aa).

Residues 1–30 (MLTTPPRTFVSVPFFFFFLLFLSLPLSSFS) form the signal peptide. Cysteine 42 and cysteine 105 are disulfide-bonded. Asparagine 80 is a glycosylation site (N-linked (GlcNAc...) asparagine). Residues 83–257 (STLKPTIIIT…LGYKVKLVPV (175 aa)) form the FAD-binding PCMH-type domain. A cross-link (6-(S-cysteinyl)-8alpha-(pros-histidyl)-FAD (His-Cys)) is located at residues 120-182 (HDYDGLSYIS…RVHGFPAGVC (63 aa)). Residues asparagine 341 and asparagine 359 are each glycosylated (N-linked (GlcNAc...) asparagine).

The protein belongs to the oxygen-dependent FAD-linked oxidoreductase family. It depends on FAD as a cofactor. In terms of processing, the FAD cofactor is bound via a bicovalent 6-S-cysteinyl, 8alpha-N1-histidyl FAD linkage.

It localises to the secreted. The protein resides in the cell wall. The chain is Berberine bridge enzyme-like 19 from Arabidopsis thaliana (Mouse-ear cress).